A 396-amino-acid polypeptide reads, in one-letter code: Dimethyladenosine transferase 2, mitochondrial (396 aa).

Residues methionine 1 to glycine 19 constitute a mitochondrion transit peptide. The disordered stretch occupies residues leucine 44–alanine 64. Residues valine 75, glutamate 124, and aspartate 150 each contribute to the S-adenosyl-L-methionine site. The interval arginine 330 to arginine 331 is DNA-binding.

It belongs to the class I-like SAM-binding methyltransferase superfamily. rRNA adenine N(6)-methyltransferase family. KsgA subfamily. In terms of assembly, homodimer. Component of the mitochondrial transcription initiation complex, composed at least of TFB2M, TFAM and POLRMT. In this complex TFAM recruits POLRMT to the promoter whereas TFB2M induces structural changes in POLRMT to enable promoter opening and trapping of the DNA non-template strand. Interacts with mitochondrial RNA polymerase POLRMT. Interacts with TFAM. Ubiquitously expressed.

The protein resides in the mitochondrion. The catalysed reaction is adenosine in rRNA + S-adenosyl-L-methionine = N(6)-methyladenosine in rRNA + S-adenosyl-L-homocysteine + H(+). Its function is as follows. S-adenosyl-L-methionine-dependent rRNA methyltransferase which may methylate two specific adjacent adenosines in the loop of a conserved hairpin near the 3'-end of 12S mitochondrial rRNA. Component of the mitochondrial transcription initiation complex, composed at least of TFB2M, TFAM and POLRMT that is required for basal transcription of mitochondrial DNA. In this complex, TFAM recruits POLRMT to a specific promoter whereas TFB2M induces structural changes in POLRMT to enable promoter opening and trapping of the DNA non-template strand. Stimulates transcription independently of the methyltransferase activity. The polypeptide is Dimethyladenosine transferase 2, mitochondrial (Homo sapiens (Human)).